Consider the following 211-residue polypeptide: Probable GTP-binding protein EngB (211 aa).

The region spanning 13-188 (SGYEIAFAGR…ASVMAGRLHF (176 aa)) is the EngB-type G domain. GTP is bound by residues 21–28 (GRSNAGKS), 48–52 (GRTQM), 67–70 (DLPG), 134–137 (TKAD), and 167–169 (FSS). 2 residues coordinate Mg(2+): serine 28 and threonine 50.

Belongs to the TRAFAC class TrmE-Era-EngA-EngB-Septin-like GTPase superfamily. EngB GTPase family. Requires Mg(2+) as cofactor.

In terms of biological role, necessary for normal cell division and for the maintenance of normal septation. In Acinetobacter baumannii (strain ATCC 17978 / DSM 105126 / CIP 53.77 / LMG 1025 / NCDC KC755 / 5377), this protein is Probable GTP-binding protein EngB.